A 214-amino-acid polypeptide reads, in one-letter code: Thymidylate kinase (214 aa).

9–16 (GIEGCGKT) contributes to the ATP binding site.

This sequence belongs to the thymidylate kinase family.

The catalysed reaction is dTMP + ATP = dTDP + ADP. Phosphorylation of dTMP to form dTDP in both de novo and salvage pathways of dTTP synthesis. The polypeptide is Thymidylate kinase (Geotalea daltonii (strain DSM 22248 / JCM 15807 / FRC-32) (Geobacter daltonii)).